A 514-amino-acid chain; its full sequence is ATP synthase subunit alpha (514 aa).

170-177 (GDRQIGKT) provides a ligand contact to ATP.

Belongs to the ATPase alpha/beta chains family. As to quaternary structure, F-type ATPases have 2 components, CF(1) - the catalytic core - and CF(0) - the membrane proton channel. CF(1) has five subunits: alpha(3), beta(3), gamma(1), delta(1), epsilon(1). CF(0) has three main subunits: a(1), b(2) and c(9-12). The alpha and beta chains form an alternating ring which encloses part of the gamma chain. CF(1) is attached to CF(0) by a central stalk formed by the gamma and epsilon chains, while a peripheral stalk is formed by the delta and b chains.

The protein localises to the cell inner membrane. It catalyses the reaction ATP + H2O + 4 H(+)(in) = ADP + phosphate + 5 H(+)(out). Produces ATP from ADP in the presence of a proton gradient across the membrane. The alpha chain is a regulatory subunit. This chain is ATP synthase subunit alpha, found in Pseudomonas putida (strain W619).